The chain runs to 100 residues: NADH-quinone oxidoreductase subunit K 1 (100 aa).

Helical transmembrane passes span L4–V24, I29–F49, and I60–M80.

Belongs to the complex I subunit 4L family. NDH-1 is composed of 14 different subunits. Subunits NuoA, H, J, K, L, M, N constitute the membrane sector of the complex.

It localises to the cell inner membrane. The enzyme catalyses a quinone + NADH + 5 H(+)(in) = a quinol + NAD(+) + 4 H(+)(out). Its function is as follows. NDH-1 shuttles electrons from NADH, via FMN and iron-sulfur (Fe-S) centers, to quinones in the respiratory chain. The immediate electron acceptor for the enzyme in this species is believed to be ubiquinone. Couples the redox reaction to proton translocation (for every two electrons transferred, four hydrogen ions are translocated across the cytoplasmic membrane), and thus conserves the redox energy in a proton gradient. This chain is NADH-quinone oxidoreductase subunit K 1, found in Geotalea daltonii (strain DSM 22248 / JCM 15807 / FRC-32) (Geobacter daltonii).